The chain runs to 375 residues: Ferredoxin--NADP reductase, root-type isozyme, chloroplastic (375 aa).

The N-terminal 60 residues, Met1–Met60, are a transit peptide targeting the chloroplast. The FAD-binding FR-type domain maps to Lys91–Leu219. FAD is bound by residues Arg151 to Leu154, Cys172 to Arg174, Tyr178, Val193 to Ser195, and Thr235. Arg174 provides a ligand contact to NADP(+). NADP(+) contacts are provided by residues Thr235, Val266–Ala267, Ser296–Arg297, Lys306, Gly334–Leu335, and Glu373.

The protein belongs to the ferredoxin--NADP reductase type 1 family. The cofactor is FAD.

The protein localises to the plastid. It localises to the chloroplast. The catalysed reaction is 2 reduced [2Fe-2S]-[ferredoxin] + NADP(+) + H(+) = 2 oxidized [2Fe-2S]-[ferredoxin] + NADPH. It functions in the pathway energy metabolism; photosynthesis. Its function is as follows. May play a key role in regulating the relative amounts of cyclic and non-cyclic electron flow to meet the demands of the plant for ATP and reducing power. Is involved in nitrate assimilation. The polypeptide is Ferredoxin--NADP reductase, root-type isozyme, chloroplastic (Nicotiana tabacum (Common tobacco)).